The following is a 171-amino-acid chain: FVTVLGSITDILVTEFGNNFINLSFLRLFRAARLIKLLRQGYTIRILLWTFVQSFKALPYVCLLIAMLFFIYAIIGMQVFGNIGIEEEDDESAITQHNNFRTFFQALMLLFRSATGEAWHEIMLSCLSGKPCDENSGIKEDECGNEFAYFYFVSFIFLCSFLMLNLFVAVI.

Residues 1–11 (FVTVLGSITDI) traverse the membrane as a helical segment. The stretch at 1 to 171 (FVTVLGSITD…LMLNLFVAVI (171 aa)) is one IV repeat. The Extracellular portion of the chain corresponds to 12-18 (LVTEFGN). A helical membrane pass occupies residues 19-37 (NFINLSFLRLFRAARLIKL). At 38 to 56 (LRQGYTIRILLWTFVQSFK) the chain is on the cytoplasmic side. A helical transmembrane segment spans residues 57–76 (ALPYVCLLIAMLFFIYAIIG). The Extracellular portion of the chain corresponds to 77 to 143 (MQVFGNIGIE…ENSGIKEDEC (67 aa)). A helical membrane pass occupies residues 144–168 (GNEFAYFYFVSFIFLCSFLMLNLFV). Over 169–171 (AVI) the chain is Cytoplasmic.

It belongs to the calcium channel alpha-1 subunit (TC 1.A.1.11) family. CACNA1A subfamily. In terms of assembly, voltage-dependent calcium channels are multisubunit complexes, consisting of alpha-1, alpha-2, beta and delta subunits in a 1:1:1:1 ratio. The channel activity is directed by the pore-forming and voltage-sensitive alpha-1 subunit. In many cases, this subunit is sufficient to generate voltage-sensitive calcium channel activity. The auxiliary subunits beta and alpha-2/delta linked by a disulfide bridge regulate the channel activity.

It localises to the cell membrane. It catalyses the reaction Ca(2+)(in) = Ca(2+)(out). In terms of biological role, the isoform alpha-1A gives rise to P and/or Q-type calcium currents. P/Q-type calcium channels belong to the 'high-voltage activated' (HVA) group. This chain is Voltage-dependent P/Q-type calcium channel subunit alpha-1A (CACNA1A), found in Gallus gallus (Chicken).